The chain runs to 342 residues: S-adenosylmethionine:tRNA ribosyltransferase-isomerase (342 aa).

This sequence belongs to the QueA family. Monomer.

It is found in the cytoplasm. The enzyme catalyses 7-aminomethyl-7-carbaguanosine(34) in tRNA + S-adenosyl-L-methionine = epoxyqueuosine(34) in tRNA + adenine + L-methionine + 2 H(+). It functions in the pathway tRNA modification; tRNA-queuosine biosynthesis. Functionally, transfers and isomerizes the ribose moiety from AdoMet to the 7-aminomethyl group of 7-deazaguanine (preQ1-tRNA) to give epoxyqueuosine (oQ-tRNA). The chain is S-adenosylmethionine:tRNA ribosyltransferase-isomerase from Listeria innocua serovar 6a (strain ATCC BAA-680 / CLIP 11262).